Here is a 917-residue protein sequence, read N- to C-terminus: Outer kinetochore KNL1 complex subunit SPC105 (917 aa).

A compositionally biased stretch (basic and acidic residues) spans 1-17 (MNVDERSRIGGREKDAG). Residues 1-38 (MNVDERSRIGGREKDAGPGKGILKQNQSSQMTSSFLEN) are disordered. Residues 24 to 36 (KQNQSSQMTSSFL) are compositionally biased toward polar residues. Serine 77 carries the phosphoserine modification. 3 disordered regions span residues 93-172 (QNNE…MEMT), 235-282 (TEYE…QPME), and 324-343 (HHID…KRRK). Residues 106–126 (STNSPTKISSQEEPLVTSTQI) are compositionally biased toward polar residues. The span at 127 to 137 (DDARTEEKTAA) shows a compositional bias: basic and acidic residues. An MELT motif is present at residues 146 to 149 (MELT). Threonine 149 is modified (phosphothreonine; by MPS1). Residues 156 to 170 (PDSNKASQHDPTSME) are compositionally biased toward polar residues. An interacts with the BUB1-BUB3 complex region spans residues 165–183 (DPTSMEMTEVFPRSIRQKN). Short sequence motifs (MELT; degenerate) lie at residues 169-172 (MEMT) and 232-235 (IDLT). Phosphothreonine; by MPS1 occurs at positions 172 and 235. The segment covering 245 to 257 (NSVSRSTGKSSDY) has biased composition (polar residues). 2 stretches are compositionally biased toward basic and acidic residues: residues 258–273 (SVER…KSEN) and 324–335 (HHIDESPSEKHA). Threonine 356 carries the phosphothreonine modification. Position 380 is a phosphoserine (serine 380). Residues 397 to 427 (DVFTIEPGTEDTGMQTATDDEEDGENVDDNG) are disordered. The segment covering 414 to 424 (TDDEEDGENVD) has biased composition (acidic residues). The interval 507–638 (PILEVEAFRC…IKEEIRSLKN (132 aa)) is required for interaction with KRE28. A coiled-coil region spans residues 591 to 628 (ELILAENLNTLKREYEKLNEEVEKVNSIRGKIRKLNEA).

In terms of assembly, component of the KNL1/SPC105 complex composed of SPC105 and KRE28. Part of the outer kinetochore KMN network that includes the KNL1, MIS12 and NDC80 complexes. Interacts (via phosphorylated MELT motifs) with BUB1 and BUB3 in the BUB1-BUB3 complex; the interaction is direct. Interacts with the MIS12 complex subunits MTW1 (via C-terminus) and NSL1 (via C-terminus). Interacts with the NDC80 complex subunits SPC24 and SPC25. Interacts with CNN1 (via N-terminus).

It localises to the nucleus. It is found in the chromosome. Its subcellular location is the centromere. The protein resides in the kinetochore. Its function is as follows. Acts as a component of the outer kinetochore KNL1 complex that serves as a docking point for spindle assembly checkpoint components and mediates microtubule-kinetochore interactions. Kinetochores, consisting of a centromere-associated inner segment and a microtubule-contacting outer segment, play a crucial role in chromosome segregation by mediating the physical connection between centromeric DNA and spindle microtubules. The outer kinetochore is made up of the ten-subunit KMN network, comprising the MIS12, NDC80 and KNL1 complexes, and auxiliary microtubule-associated components; together they connect the outer kinetochore with the inner kinetochore, bind microtubules, and mediate interactions with mitotic checkpoint proteins that delay anaphase until chromosomes are bioriented on the spindle. Recruits the BUB1-BUB3 complex to kinetochores when phosphorylated by MPS1, to support spindle assembly checkpoint signaling; the effect is reversed by protein phosphatase 1 (PP1). The KNL1 complex is required for kinetochore binding by the kMAPs (kinetochore-bound microtubule-associated proteins) BIM1, BIK1 and SLK19, and motors CIN8 and KAR3. The polypeptide is Outer kinetochore KNL1 complex subunit SPC105 (SPC105) (Saccharomyces cerevisiae (strain ATCC 204508 / S288c) (Baker's yeast)).